A 204-amino-acid polypeptide reads, in one-letter code: Recombination protein RecR (204 aa).

Residues 58–75 form a C4-type zinc finger; that stretch reads CTICQNITDVGTDPCAIC. Residues 83–181 form the Toprim domain; that stretch reads TVICVVESPV…AVTKIARGIP (99 aa).

The protein belongs to the RecR family.

May play a role in DNA repair. It seems to be involved in an RecBC-independent recombinational process of DNA repair. It may act with RecF and RecO. This is Recombination protein RecR from Chlorobium chlorochromatii (strain CaD3).